Here is a 225-residue protein sequence, read N- to C-terminus: MAQSDFLYPENPKRREEVNRLHQQLLDCLSDSFDVTNKLTEVLNMHLGCRLASIEMKRDGTIKENCDLIIQAIMKIQKELQKVDEALKDKLEPTLYRKLQDIKEKETDKIAIVQKVISVILGEATSAASAVAVKLVGSNVTTGIINKLVTVLAQIGASLLGSIGVAVLGLGIDMIVRAILGAVEKTQLQAAIKSYEKHLVEFKSASEKYNHAITEVINTVKHQMK.

The stretch at 62-92 (IKENCDLIIQAIMKIQKELQKVDEALKDKLE) forms a coiled coil. A helical membrane pass occupies residues 155-175 (IGASLLGSIGVAVLGLGIDMI). A coiled-coil region spans residues 183-207 (VEKTQLQAAIKSYEKHLVEFKSASE).

The protein resides in the membrane. This Homo sapiens (Human) protein is Single-pass membrane and coiled-coil domain-containing protein 3 (SMCO3).